The chain runs to 294 residues: Cytidine deaminase (294 aa).

CMP/dCMP-type deaminase domains are found at residues 48–168 (DEDA…FGPK) and 186–294 (LTGD…VLLG). Substrate is bound at residue 89-91 (NME). His102 provides a ligand contact to Zn(2+). Residue Glu104 is the Proton donor of the active site. The Zn(2+) site is built by Cys129 and Cys132.

Belongs to the cytidine and deoxycytidylate deaminase family. As to quaternary structure, homodimer. It depends on Zn(2+) as a cofactor.

The catalysed reaction is cytidine + H2O + H(+) = uridine + NH4(+). The enzyme catalyses 2'-deoxycytidine + H2O + H(+) = 2'-deoxyuridine + NH4(+). Functionally, this enzyme scavenges exogenous and endogenous cytidine and 2'-deoxycytidine for UMP synthesis. This chain is Cytidine deaminase, found in Salmonella schwarzengrund (strain CVM19633).